A 755-amino-acid polypeptide reads, in one-letter code: Polyribonucleotide nucleotidyltransferase (755 aa).

The Mg(2+) site is built by Asp545 and Asp551. Residues 611-670 form the KH domain; the sequence is PRITAITVPVNKIGEVIGPKGKTINSITEETGANISIEEDGTVYVSAASGAAAEAAIEKI. The region spanning 682–751 is the S1 motif domain; it reads GERFLGTVVK…NRGKISLAPV (70 aa).

This sequence belongs to the polyribonucleotide nucleotidyltransferase family. It depends on Mg(2+) as a cofactor.

It is found in the cytoplasm. It carries out the reaction RNA(n+1) + phosphate = RNA(n) + a ribonucleoside 5'-diphosphate. Functionally, involved in mRNA degradation. Catalyzes the phosphorolysis of single-stranded polyribonucleotides processively in the 3'- to 5'-direction. This Corynebacterium diphtheriae (strain ATCC 700971 / NCTC 13129 / Biotype gravis) protein is Polyribonucleotide nucleotidyltransferase.